Reading from the N-terminus, the 256-residue chain is Small ribosomal subunit protein eS1 (256 aa).

Over residues 1–18 the composition is skewed to basic residues; it reads MAVGKNKRLSKGKKGLKK. A disordered region spans residues 1 to 20; sequence MAVGKNKRLSKGKKGLKKKA. At alanine 2 the chain carries N-acetylalanine; partial.

It belongs to the eukaryotic ribosomal protein eS1 family. As to quaternary structure, component of the small ribosomal subunit. Mature ribosomes consist of a small (40S) and a large (60S) subunit. The 40S subunit contains about 33 different proteins and 1 molecule of RNA (18S). The 60S subunit contains about 49 different proteins and 3 molecules of RNA (25S, 5.8S and 5S).

The protein localises to the cytoplasm. This Podospora anserina (strain S / ATCC MYA-4624 / DSM 980 / FGSC 10383) (Pleurage anserina) protein is Small ribosomal subunit protein eS1.